A 747-amino-acid chain; its full sequence is Sulfhydryl oxidase 1 (747 aa).

Positions 1–29 (MRRCNSGSGPPPSLLLLLLWLLAVPGANA) are cleaved as a signal peptide. The region spanning 36 to 156 (YSPSDPLTLL…RERLIDALES (121 aa)) is the Thioredoxin domain. Catalysis depends on nucleophile residues cysteine 70 and cysteine 73. Cystine bridges form between cysteine 70–cysteine 73 and cysteine 101–cysteine 110. N-linked (GlcNAc...) (complex) asparagine glycosylation occurs at asparagine 130. A glycan (N-linked (GlcNAc...) asparagine) is linked at asparagine 243. Cysteines 393 and 405 form a disulfide. The ERV/ALR sulfhydryl oxidase domain occupies 396–503 (SEPHFRGFPC…EDPQFPKVQW (108 aa)). FAD-binding residues include arginine 401, tryptophan 408, and histidine 412. Residue serine 426 is modified to Phosphoserine; by FAM20C. The cysteines at positions 449 and 452 are disulfide-linked. FAD contacts are provided by residues aspartate 451, histidine 455, 478–485 (WSSHNRVN), lysine 500, and tryptophan 503. Cysteine 509 and cysteine 512 are disulfide-bonded. The disordered stretch occupies residues 573–633 (SRNSTLDPGK…HMAELQRNEQ (61 aa)). Residue asparagine 575 is glycosylated (N-linked (GlcNAc...) asparagine). A compositionally biased stretch (basic and acidic residues) spans 621 to 633 (PPEHMAELQRNEQ). A helical transmembrane segment spans residues 710–730 (ISLCVGLYSLSFMGLLAMYTY).

This sequence belongs to the quiescin-sulfhydryl oxidase (QSOX) family. As to quaternary structure, monomer. Requires FAD as cofactor. In terms of processing, N-glycosylated. O-glycosylated on Thr and Ser residues. In terms of tissue distribution, expressed in heart, placenta, lung, liver, skeletal muscle, pancreas and very weakly in brain and kidney.

It localises to the golgi apparatus membrane. The protein resides in the secreted. The catalysed reaction is 2 R'C(R)SH + O2 = R'C(R)S-S(R)CR' + H2O2. Its function is as follows. Catalyzes the oxidation of sulfhydryl groups in peptide and protein thiols to disulfides with the reduction of oxygen to hydrogen peroxide. Plays a role in disulfide bond formation in a variety of extracellular proteins. In fibroblasts, required for normal incorporation of laminin into the extracellular matrix, and thereby for normal cell-cell adhesion and cell migration. The chain is Sulfhydryl oxidase 1 (QSOX1) from Homo sapiens (Human).